The following is an 84-amino-acid chain: MPNIKSAIKRVKTAETRNSRNASQRSAMRTAIKKFDEAAANNADNAKDLYVEASKKLDSAVSKGLIHKNNAARNKSRLAAKLAK.

The tract at residues 1 to 28 (MPNIKSAIKRVKTAETRNSRNASQRSAM) is disordered.

The protein belongs to the bacterial ribosomal protein bS20 family.

In terms of biological role, binds directly to 16S ribosomal RNA. This Listeria monocytogenes serotype 4b (strain CLIP80459) protein is Small ribosomal subunit protein bS20.